The chain runs to 297 residues: Putative S-adenosyl-L-methionine-dependent methyltransferase MSMEG_0614/MSMEI_0598 (297 aa).

Residues aspartate 125 and 154–155 (DL) contribute to the S-adenosyl-L-methionine site.

Belongs to the UPF0677 family.

Exhibits S-adenosyl-L-methionine-dependent methyltransferase activity. This is Putative S-adenosyl-L-methionine-dependent methyltransferase MSMEG_0614/MSMEI_0598 from Mycolicibacterium smegmatis (strain ATCC 700084 / mc(2)155) (Mycobacterium smegmatis).